Consider the following 598-residue polypeptide: Acetylcholine receptor subunit alpha-type acr-5 (598 aa).

Residues 1-16 form the signal peptide; it reads MLPNIILILLIRYCSC. Over 17–323 the chain is Extracellular; the sequence is GAGSRVYEKY…HLVIRRKPLY (307 aa). Residues N54, N71, N77, N134, N178, and N252 are each glycosylated (N-linked (GlcNAc...) asparagine). The chain crosses the membrane as a helical span at residues 324–344; it reads YMINLVVPTSIITIVAVTGFF. Topologically, residues 345-356 are cytoplasmic; that stretch reads TPTSSSSERDEK. The helical transmembrane segment at 357-377 threads the bilayer; it reads LYLGINTLLTMSVMMLMVCNQ. Residues 378 to 391 lie on the Extracellular side of the membrane; sequence MPSTSTYVPLMSWY. Residues 392-412 traverse the membrane as a helical segment; it reads YIGIIMVIVVGTFLATGVLAI. At 413–563 the chain is on the cytoplasmic side; it reads HGQKHYNKPI…WEFLANVLDR (151 aa). The helical transmembrane segment at 564 to 584 threads the bilayer; that stretch reads ILLTIFCGFTFAVFIILIGFD. Over 585-598 the chain is Extracellular; it reads SFFTFHTDSPPKTM.

It belongs to the ligand-gated ion channel (TC 1.A.9) family. Acetylcholine receptor (TC 1.A.9.1) subfamily.

The protein resides in the postsynaptic cell membrane. Its subcellular location is the cell membrane. Subunit of nicotinic acetylcholine receptor (nAChR). Involved in nAChR sensitivity to nicotine. Modulates locomotion towards the drug nicotine. The protein is Acetylcholine receptor subunit alpha-type acr-5 of Caenorhabditis elegans.